We begin with the raw amino-acid sequence, 127 residues long: MATTSRKKKKVKVTPEGTVHIKASFNNVLVTITDMQGNTVSWSSAGKNGFKGSKKNTPYASQITSESAAKEAYDLGMRYVHVFIKGPGSGRDAAIRALQGAGLEVRSIKDITPLPHNGCRPPKRRRV.

Belongs to the universal ribosomal protein uS11 family. Part of the 30S ribosomal subunit. Interacts with proteins S7 and S18. Binds to IF-3.

Located on the platform of the 30S subunit, it bridges several disparate RNA helices of the 16S rRNA. Forms part of the Shine-Dalgarno cleft in the 70S ribosome. The polypeptide is Small ribosomal subunit protein uS11 (Chlorobium phaeobacteroides (strain BS1)).